We begin with the raw amino-acid sequence, 443 residues long: Zinc finger CCCH domain-containing protein 63 (443 aa).

Disordered regions lie at residues 1–29 (MDFD…MAPT) and 56–99 (LPGP…SSSW). 2 consecutive C3H1-type zinc fingers follow at residues 30 to 56 (DTRQ…HREL) and 109 to 136 (TKTE…HCWS). 6 WD repeats span residues 149 to 190 (GHEK…GVLK), 228 to 265 (GPVG…NCFE), 272 to 311 (GHTL…QTLT), 313 to 349 (HSSV…NLEV), 354 to 396 (KEEH…LFIR), and 404 to 442 (FAKQ…TAAL).

This Arabidopsis thaliana (Mouse-ear cress) protein is Zinc finger CCCH domain-containing protein 63 (ZFWD2).